The following is a 632-amino-acid chain: MTINYNLAVSTSKPWTLFKLLLKWRGSIWKAVILELAVWLVLYGILSVIYRTALNPGQQRTFERIVQYCDSRLSYIPLNFMLGFFVTAVVNRWTYLYQIIGFIDNIGLMAAEYVRGRTEQARMYRRNIVRYCELAQVLVFRDISMRTRRRFPTLDTVVAAGFMMPHEKDRFDEIQYKYSKYWVPFQWAFSLTYEARKKGLIESDYYQVVVQDEIKKFRTGLAWICNYDWVPIPIMYPQLVCLAVHTYFLVCLLARQYVVSEHADNKTEIDLYFPIMSTLQFIFYMGWMKVAEAMLNPFGEDDDDFECNALIDRNITMVLMMVDQGYDRAPDLKRDDFWDEEVEPLYSEETAKIPNNPLKGSVSDVKLPEYVHEIKMVPHCDDASPLVPGDEMRRRRVSVVPVKPSDQQHHHHGHRTRTSLGNIEMFRSFKNKIERSFSKPHLHDDLGRKTFSHGMLENMEFEGSNTNIADGSHANNNSFTNSAFVNSGEDLSNKRIDTSSSQPQLATGKRGSEHPFQHHVLDDVLEDDESDENQLTIRKKSSVLQPAITLVERFNEATGQLETEVKRDEKKKKEEELREEGDNGKEEKDNKEDKKEEQDRPSRPTRPFFIGVVRSESEDHSHPHLRPPTKFE.

Transmembrane regions (helical) follow at residues 28–48 (IWKA…ILSV), 83–103 (GFFV…IGFI), 234–254 (IMYP…CLLA), and 271–291 (LYFP…MKVA). Disordered stretches follow at residues 491 to 516 (LSNK…EHPF) and 562 to 632 (ETEV…TKFE). Residues 563-602 (TEVKRDEKKKKEEELREEGDNGKEEKDNKEDKKEEQDRPS) are compositionally biased toward basic and acidic residues. The segment covering 623–632 (PHLRPPTKFE) has biased composition (basic residues).

It belongs to the anion channel-forming bestrophin (TC 1.A.46) family. Calcium-sensitive chloride channel subfamily. In terms of assembly, forms oligomers.

It is found in the cell membrane. Forms chloride channels. The chain is Bestrophin homolog 24 (best-24) from Caenorhabditis elegans.